The chain runs to 499 residues: Calcium/calmodulin-dependent protein kinase type II subunit delta (499 aa).

A2 carries the post-translational modification N-acetylalanine. Positions 14–272 constitute a Protein kinase domain; that stretch reads YQLFEELGKG…ASEALKHPWI (259 aa). ATP is bound by residues 20–28 and K43; that span reads LGKGAFSVV. D136 functions as the Proton acceptor in the catalytic mechanism. The tract at residues 283-292 is autoinhibitory domain; sequence HRQETVDCLK. Residue T287 is modified to Phosphothreonine; by autocatalysis. The segment at 291–301 is calmodulin-binding; the sequence is LKKFNARRKLK. A phosphothreonine; by autocatalysis mark is found at T306 and T307. S315 is modified (phosphoserine). At K318 the chain carries N6-acetyllysine. Phosphoserine occurs at positions 319 and 330. A Phosphothreonine modification is found at T331. The residue at position 333 (S333) is a Phosphoserine. Phosphothreonine is present on residues T336 and T337. 3 positions are modified to phosphoserine: S404, S490, and S494.

It belongs to the protein kinase superfamily. CAMK Ser/Thr protein kinase family. CaMK subfamily. As to quaternary structure, CAMK2 is composed of 4 different chains: alpha (CAMK2A), beta (CAMK2B), gamma (CAMK2G), and delta (CAMK2D). The different isoforms assemble into homo- or heteromultimeric holoenzymes composed of 12 subunits with two hexameric rings stacked one on top of the other. Interacts with RRAD and CACNB2. In terms of processing, autophosphorylation of Thr-287 following activation by Ca(2+)/calmodulin. Phosphorylation of Thr-287 locks the kinase into an activated state. Expressed in cardiac muscle and skeletal muscle. Isoform Delta 3, isoform Delta 2, isoform Delta 8 and isoform Delta 9 are expressed in cardiac muscle. Isoform Delta 11 is expressed in skeletal muscle.

It localises to the cell membrane. The protein localises to the sarcolemma. Its subcellular location is the sarcoplasmic reticulum membrane. It catalyses the reaction L-seryl-[protein] + ATP = O-phospho-L-seryl-[protein] + ADP + H(+). The enzyme catalyses L-threonyl-[protein] + ATP = O-phospho-L-threonyl-[protein] + ADP + H(+). With respect to regulation, activated by Ca(2+)/calmodulin. Binding of calmodulin results in conformational change that relieves intrasteric autoinhibition and allows autophosphorylation of Thr-287 which turns the kinase in a constitutively active form and confers to the kinase a Ca(2+)-independent activity. Calcium/calmodulin-dependent protein kinase involved in the regulation of Ca(2+) homeostatis and excitation-contraction coupling (ECC) in heart by targeting ion channels, transporters and accessory proteins involved in Ca(2+) influx into the myocyte, Ca(2+) release from the sarcoplasmic reticulum (SR), SR Ca(2+) uptake and Na(+) and K(+) channel transport. Targets also transcription factors and signaling molecules to regulate heart function. In its activated form, is involved in the pathogenesis of dilated cardiomyopathy and heart failure. Contributes to cardiac decompensation and heart failure by regulating SR Ca(2+) release via direct phosphorylation of RYR2 Ca(2+) channel on 'Ser-2808'. In the nucleus, phosphorylates the MEF2 repressor HDAC4, promoting its nuclear export and binding to 14-3-3 protein, and expression of MEF2 and genes involved in the hypertrophic program. Is essential for left ventricular remodeling responses to myocardial infarction. In pathological myocardial remodeling acts downstream of the beta adrenergic receptor signaling cascade to regulate key proteins involved in ECC. Regulates Ca(2+) influx to myocytes by binding and phosphorylating the L-type Ca(2+) channel subunit beta-2 CACNB2. In addition to Ca(2+) channels, can target and regulate the cardiac sarcolemmal Na(+) channel Nav1.5/SCN5A and the K+ channel Kv4.3/KCND3, which contribute to arrhythmogenesis in heart failure. Phosphorylates phospholamban (PLN/PLB), an endogenous inhibitor of SERCA2A/ATP2A2, contributing to the enhancement of SR Ca(2+) uptake that may be important in frequency-dependent acceleration of relaxation (FDAR) and maintenance of contractile function during acidosis. May participate in the modulation of skeletal muscle function in response to exercise, by regulating SR Ca(2+) transport through phosphorylation of PLN/PLB and triadin, a ryanodine receptor-coupling factor. In response to interferon-gamma (IFN-gamma) stimulation, catalyzes phosphorylation of STAT1, stimulating the JAK-STAT signaling pathway. In Homo sapiens (Human), this protein is Calcium/calmodulin-dependent protein kinase type II subunit delta (CAMK2D).